A 331-amino-acid polypeptide reads, in one-letter code: NADH-quinone oxidoreductase subunit H (331 aa).

The next 9 helical transmembrane spans lie at 5–25, 45–65, 78–98, 122–142, 156–176, 192–212, 245–265, 271–291, and 311–331; these read LFFVITTIVKAVVILAVMASL, GPDMVGPAGVLQIVADMIKLF, FIFLIAPLISAIAAFAALAPV, VLYIAGVAAVCVFSPLAAGLA, VVALLSFEVVAGMALLSVVMV, IFNWLIFKQPLAFVLFVMASF, FFIGEYTNMIAASIIITLLFL, FLFIPGALMIILKSSLVFFFF, and WKILLPLGILNVVITGFALLI.

The protein belongs to the complex I subunit 1 family. In terms of assembly, NDH-1 is composed of 14 different subunits. Subunits NuoA, H, J, K, L, M, N constitute the membrane sector of the complex.

It is found in the cell inner membrane. The enzyme catalyses a quinone + NADH + 5 H(+)(in) = a quinol + NAD(+) + 4 H(+)(out). In terms of biological role, NDH-1 shuttles electrons from NADH, via FMN and iron-sulfur (Fe-S) centers, to quinones in the respiratory chain. The immediate electron acceptor for the enzyme in this species is believed to be ubiquinone. Couples the redox reaction to proton translocation (for every two electrons transferred, four hydrogen ions are translocated across the cytoplasmic membrane), and thus conserves the redox energy in a proton gradient. This subunit may bind ubiquinone. The sequence is that of NADH-quinone oxidoreductase subunit H from Campylobacter concisus (strain 13826).